The chain runs to 218 residues: Superoxide dismutase [Mn], mitochondrial (218 aa).

The N-terminal 21 residues, 1–21, are a transit peptide targeting the mitochondrion; sequence MLRFLSKNSVAAIRNVSIARG. Positions 50 and 96 each coordinate Mn(2+). Serine 129 is subject to Phosphoserine. The Mn(2+) site is built by aspartate 181 and histidine 185.

The protein belongs to the iron/manganese superoxide dismutase family. Homodimer. Mn(2+) is required as a cofactor.

It localises to the mitochondrion matrix. The enzyme catalyses 2 superoxide + 2 H(+) = H2O2 + O2. Destroys superoxide anion radicals which are normally produced within the cells and which are toxic to biological systems. This chain is Superoxide dismutase [Mn], mitochondrial (sod2), found in Schizosaccharomyces pombe (strain 972 / ATCC 24843) (Fission yeast).